Consider the following 469-residue polypeptide: Ribosomal protein uS12 methylthiotransferase RimO (469 aa).

The 115-residue stretch at 1-115 folds into the MTTase N-terminal domain; that stretch reads MKFHIITLGC…IGSVVAGGVA (115 aa). Cys10, Cys46, Cys78, Cys180, Cys184, and Cys187 together coordinate [4Fe-4S] cluster. The Radical SAM core domain maps to 166–398; sequence NKRGPSAYLK…MAVQQVISRA (233 aa). One can recognise a TRAM domain in the interval 401–469; the sequence is ARFVGQTMKV…TDYDLWGEIV (69 aa).

The protein belongs to the methylthiotransferase family. RimO subfamily. [4Fe-4S] cluster serves as cofactor.

The protein resides in the cytoplasm. The enzyme catalyses L-aspartate(89)-[ribosomal protein uS12]-hydrogen + (sulfur carrier)-SH + AH2 + 2 S-adenosyl-L-methionine = 3-methylsulfanyl-L-aspartate(89)-[ribosomal protein uS12]-hydrogen + (sulfur carrier)-H + 5'-deoxyadenosine + L-methionine + A + S-adenosyl-L-homocysteine + 2 H(+). In terms of biological role, catalyzes the methylthiolation of an aspartic acid residue of ribosomal protein uS12. The chain is Ribosomal protein uS12 methylthiotransferase RimO from Herpetosiphon aurantiacus (strain ATCC 23779 / DSM 785 / 114-95).